The chain runs to 75 residues: MNPSEMQRKGPPRRWCLQVYPTAPKRQRPSRTGHDDDGGFVEKKRGKCGEKQERSNCYCVCVERSRHRRLHFVMC.

Residues 21–43 are disordered; the sequence is PTAPKRQRPSRTGHDDDGGFVEK. The span at 32 to 43 shows a compositional bias: basic and acidic residues; it reads TGHDDDGGFVEK.

The protein resides in the nucleus. May possess a function in tumorigenesis. The polypeptide is Endogenous retrovirus group K member 10 Np9 protein (ERVK-10) (Homo sapiens (Human)).